The following is a 174-amino-acid chain: MWVNLSCMCHIVDKLLELNLRRWNMRSTSIYVLASRWKKVVSDNTLIEGQRIRLWSFHSLAKLYIALVPLDPAPAPTLAILLAPAPTPSSPPVVTRDSDELYISHADAQEEGDRILPVHADNDWECLNLLAKVSEETTCLEVSQEANRRSSLVSDTELDLELRLSLPGKNSYVM.

The TF-B3 DNA-binding region spans 1–71 (MWVNLSCMCH…KLYIALVPLD (71 aa)).

The protein resides in the nucleus. In Arabidopsis thaliana (Mouse-ear cress), this protein is B3 domain-containing protein At2g31862.